Here is a 211-residue protein sequence, read N- to C-terminus: MFIVIEGCEGSGKSSLTQLLKDKLMAEGKAVVATREPGGSSLGERVRDWILDPSTTELSPYTELFLFLAARAQHITEKILPALELGKIVVCDRFHDSTIVYQGIVGGLGKEYVTNLCHSVVGQKKILPNLTCLLDIPADEGLKRKQQQKSFDKFENQSLAYHTKIREGFLSLAESRLDSYLVLDARQPIEESLNKVMTAYTELALCKSKER.

7 to 14 (GCEGSGKS) is a binding site for ATP.

The protein belongs to the thymidylate kinase family.

The catalysed reaction is dTMP + ATP = dTDP + ADP. Functionally, phosphorylation of dTMP to form dTDP in both de novo and salvage pathways of dTTP synthesis. The polypeptide is Thymidylate kinase (Chlamydia abortus (strain DSM 27085 / S26/3) (Chlamydophila abortus)).